The sequence spans 157 residues: Biotin carboxyl carrier protein of acetyl-CoA carboxylase (157 aa).

Positions 80–156 (YATIVSPMVG…DCGQALMKVE (77 aa)) constitute a Biotinyl-binding domain. At K122 the chain carries N6-biotinyllysine.

The protein localises to the plastid. Its subcellular location is the chloroplast. It participates in lipid metabolism; fatty acid biosynthesis. Its function is as follows. This protein is a component of the acetyl coenzyme A carboxylase complex; first, biotin carboxylase catalyzes the carboxylation of the carrier protein and then the transcarboxylase transfers the carboxyl group to form malonyl-CoA. This is Biotin carboxyl carrier protein of acetyl-CoA carboxylase (accB) from Porphyra purpurea (Red seaweed).